A 305-amino-acid chain; its full sequence is Ribonuclease H (305 aa).

It catalyses the reaction Endonucleolytic cleavage to 5'-phosphomonoester.. In terms of biological role, plays essential roles in DNA replication by removing the RNA primers from lagging strand fragments. Exhibits 5'to 3' exonuclease activity on either RNA/DNA or DNA/DNA duplexes and endonuclease activity on either flap or fork DNA structures. The sequence is that of Ribonuclease H (rnh) from Enterobacteria phage T4 (Bacteriophage T4).